Consider the following 911-residue polypeptide: Probable dipeptidyl-aminopeptidase B (911 aa).

The tract at residues 1-39 (MPRPRAAKEEETELLAQHQESPRPSSDGSEASASSISTT) is disordered. Topologically, residues 1–97 (MPRPRAAKEE…TPVDKKARRT (97 aa)) are cytoplasmic. Low complexity predominate over residues 25–39 (SSDGSEASASSISTT). A helical; Signal-anchor for type II membrane protein membrane pass occupies residues 98–118 (LWIVGTICAVGWALALVSFLM). Over 119–911 (NGNYKHSSTR…AQADARSLGR (793 aa)) the chain is Vacuolar. N-linked (GlcNAc...) asparagine glycosylation is found at asparagine 268 and asparagine 564. Serine 755 acts as the Charge relay system in catalysis. Residue asparagine 809 is glycosylated (N-linked (GlcNAc...) asparagine). Active-site charge relay system residues include aspartate 832 and histidine 865.

The protein belongs to the peptidase S9B family.

The protein resides in the vacuole membrane. It carries out the reaction Release of an N-terminal dipeptide, Xaa-Yaa-|-Zaa-, from a polypeptide, preferentially when Yaa is Pro, provided Zaa is neither Pro nor hydroxyproline.. In terms of biological role, type IV dipeptidyl-peptidase which removes N-terminal dipeptides sequentially from polypeptides having unsubstituted N-termini provided that the penultimate residue is proline. The protein is Probable dipeptidyl-aminopeptidase B (DAPB) of Phaeosphaeria nodorum (strain SN15 / ATCC MYA-4574 / FGSC 10173) (Glume blotch fungus).